A 468-amino-acid chain; its full sequence is Probable protein phosphatase 2C 52 (468 aa).

The PPM-type phosphatase domain occupies 67–372; the sequence is SSCIFTQQGR…DDCAVVCLFL (306 aa). Residues aspartate 102, glycine 103, aspartate 317, and aspartate 363 each coordinate Mn(2+). Over residues 413-429 the composition is skewed to polar residues; that stretch reads RSSSDQENETYGNVNTE. The interval 413-442 is disordered; the sequence is RSSSDQENETYGNVNTETDAEDEKTVGDQN.

It belongs to the PP2C family. The cofactor is Mg(2+). It depends on Mn(2+) as a cofactor.

The enzyme catalyses O-phospho-L-seryl-[protein] + H2O = L-seryl-[protein] + phosphate. It catalyses the reaction O-phospho-L-threonyl-[protein] + H2O = L-threonyl-[protein] + phosphate. This is Probable protein phosphatase 2C 52 from Arabidopsis thaliana (Mouse-ear cress).